Consider the following 300-residue polypeptide: Putative S-adenosyl-L-methionine-dependent methyltransferase Mkms_0379 (300 aa).

Residues D128 and 157-158 (DL) each bind S-adenosyl-L-methionine.

It belongs to the UPF0677 family.

Functionally, exhibits S-adenosyl-L-methionine-dependent methyltransferase activity. This chain is Putative S-adenosyl-L-methionine-dependent methyltransferase Mkms_0379, found in Mycobacterium sp. (strain KMS).